Here is a 407-residue protein sequence, read N- to C-terminus: Carbamoyl phosphate synthase small chain (407 aa).

The tract at residues 1–203 is CPSase; the sequence is MSQNESGTIA…EPCGEYEGKE (203 aa). Residues S61, G255, and G257 each coordinate L-glutamine. The Glutamine amidotransferase type-1 domain occupies 207–405; sequence TVAAVDLGIK…CELMKNNSKE (199 aa). The Nucleophile role is filled by C283. F284, Q287, N325, G327, and F328 together coordinate L-glutamine. Catalysis depends on residues H378 and E380.

Belongs to the CarA family. As to quaternary structure, composed of two chains; the small (or glutamine) chain promotes the hydrolysis of glutamine to ammonia, which is used by the large (or ammonia) chain to synthesize carbamoyl phosphate. Tetramer of heterodimers (alpha,beta)4.

It carries out the reaction hydrogencarbonate + L-glutamine + 2 ATP + H2O = carbamoyl phosphate + L-glutamate + 2 ADP + phosphate + 2 H(+). The enzyme catalyses L-glutamine + H2O = L-glutamate + NH4(+). Its pathway is amino-acid biosynthesis; L-arginine biosynthesis; carbamoyl phosphate from bicarbonate: step 1/1. The protein operates within pyrimidine metabolism; UMP biosynthesis via de novo pathway; (S)-dihydroorotate from bicarbonate: step 1/3. In terms of biological role, small subunit of the glutamine-dependent carbamoyl phosphate synthetase (CPSase). CPSase catalyzes the formation of carbamoyl phosphate from the ammonia moiety of glutamine, carbonate, and phosphate donated by ATP, constituting the first step of 2 biosynthetic pathways, one leading to arginine and/or urea and the other to pyrimidine nucleotides. The small subunit (glutamine amidotransferase) binds and cleaves glutamine to supply the large subunit with the substrate ammonia. This chain is Carbamoyl phosphate synthase small chain, found in Bifidobacterium longum (strain NCC 2705).